The primary structure comprises 156 residues: Ribonuclease pancreatic (156 aa).

The first 28 residues, 1 to 28 (MALEKSLVLLPLLVLILLVLGWVQPSLG), serve as a signal peptide directing secretion. The span at 33–43 (AKKFQRQHMDS) shows a compositional bias: basic and acidic residues. A disordered region spans residues 33–52 (AKKFQRQHMDSDSSPSSNST). Residues Lys35 and Arg38 each contribute to the substrate site. The active-site Proton acceptor is His40. Residues Asn50 and Asn62 are each glycosylated (N-linked (GlcNAc...) asparagine). Cystine bridges form between Cys54–Cys112, Cys68–Cys123, Cys86–Cys138, and Cys93–Cys100. Substrate contacts are provided by residues 69 to 73 (KPVNT) and Lys94. Asn104 carries an N-linked (GlcNAc...) asparagine glycan. Arg113 provides a ligand contact to substrate. An N-linked (GlcNAc...) asparagine glycan is attached at Asn116. Residue His147 is the Proton donor of the active site.

This sequence belongs to the pancreatic ribonuclease family. In terms of assembly, monomer. Interacts with and forms tight 1:1 complexes with RNH1. Dimerization of two such complexes may occur. Interaction with RNH1 inhibits this protein.

The protein resides in the secreted. The catalysed reaction is an [RNA] containing cytidine + H2O = an [RNA]-3'-cytidine-3'-phosphate + a 5'-hydroxy-ribonucleotide-3'-[RNA].. It carries out the reaction an [RNA] containing uridine + H2O = an [RNA]-3'-uridine-3'-phosphate + a 5'-hydroxy-ribonucleotide-3'-[RNA].. Its function is as follows. Endonuclease that catalyzes the cleavage of RNA on the 3' side of pyrimidine nucleotides. Acts on single-stranded and double-stranded RNA. The chain is Ribonuclease pancreatic (RNASE1) from Gorilla gorilla gorilla (Western lowland gorilla).